Consider the following 368-residue polypeptide: tRNA/tmRNA (uracil-C(5))-methyltransferase (368 aa).

Residues Gln190, Tyr218, Asn223, Glu239, and Asp301 each coordinate S-adenosyl-L-methionine. Cys326 serves as the catalytic Nucleophile. Residue Glu360 is the Proton acceptor of the active site.

Belongs to the class I-like SAM-binding methyltransferase superfamily. RNA M5U methyltransferase family. TrmA subfamily.

The catalysed reaction is uridine(54) in tRNA + S-adenosyl-L-methionine = 5-methyluridine(54) in tRNA + S-adenosyl-L-homocysteine + H(+). The enzyme catalyses uridine(341) in tmRNA + S-adenosyl-L-methionine = 5-methyluridine(341) in tmRNA + S-adenosyl-L-homocysteine + H(+). Its function is as follows. Dual-specificity methyltransferase that catalyzes the formation of 5-methyluridine at position 54 (m5U54) in all tRNAs, and that of position 341 (m5U341) in tmRNA (transfer-mRNA). The polypeptide is tRNA/tmRNA (uracil-C(5))-methyltransferase (Aliivibrio salmonicida (strain LFI1238) (Vibrio salmonicida (strain LFI1238))).